The following is a 398-amino-acid chain: 4-hydroxy-3-methylbut-2-enyl diphosphate reductase (398 aa).

Residue C66 coordinates [4Fe-4S] cluster. H96 is a (2E)-4-hydroxy-3-methylbut-2-enyl diphosphate binding site. Residue H96 coordinates dimethylallyl diphosphate. H96 lines the isopentenyl diphosphate pocket. Residue C157 coordinates [4Fe-4S] cluster. H185 serves as a coordination point for (2E)-4-hydroxy-3-methylbut-2-enyl diphosphate. H185 serves as a coordination point for dimethylallyl diphosphate. H185 contacts isopentenyl diphosphate. E187 serves as the catalytic Proton donor. T250 serves as a coordination point for (2E)-4-hydroxy-3-methylbut-2-enyl diphosphate. C288 is a binding site for [4Fe-4S] cluster. Residues S317, S318, N319, and S379 each coordinate (2E)-4-hydroxy-3-methylbut-2-enyl diphosphate. S317, S318, N319, and S379 together coordinate dimethylallyl diphosphate. Isopentenyl diphosphate-binding residues include S317, S318, N319, and S379.

This sequence belongs to the IspH family. It depends on [4Fe-4S] cluster as a cofactor.

It catalyses the reaction isopentenyl diphosphate + 2 oxidized [2Fe-2S]-[ferredoxin] + H2O = (2E)-4-hydroxy-3-methylbut-2-enyl diphosphate + 2 reduced [2Fe-2S]-[ferredoxin] + 2 H(+). It carries out the reaction dimethylallyl diphosphate + 2 oxidized [2Fe-2S]-[ferredoxin] + H2O = (2E)-4-hydroxy-3-methylbut-2-enyl diphosphate + 2 reduced [2Fe-2S]-[ferredoxin] + 2 H(+). Its pathway is isoprenoid biosynthesis; dimethylallyl diphosphate biosynthesis; dimethylallyl diphosphate from (2E)-4-hydroxy-3-methylbutenyl diphosphate: step 1/1. The protein operates within isoprenoid biosynthesis; isopentenyl diphosphate biosynthesis via DXP pathway; isopentenyl diphosphate from 1-deoxy-D-xylulose 5-phosphate: step 6/6. Its function is as follows. Catalyzes the conversion of 1-hydroxy-2-methyl-2-(E)-butenyl 4-diphosphate (HMBPP) into a mixture of isopentenyl diphosphate (IPP) and dimethylallyl diphosphate (DMAPP). Acts in the terminal step of the DOXP/MEP pathway for isoprenoid precursor biosynthesis. This is 4-hydroxy-3-methylbut-2-enyl diphosphate reductase from Synechococcus sp. (strain ATCC 27144 / PCC 6301 / SAUG 1402/1) (Anacystis nidulans).